Consider the following 376-residue polypeptide: 23S rRNA (uracil(747)-C(5))-methyltransferase RlmC (376 aa).

Residues Cys-3, Cys-11, Cys-14, and Cys-87 each contribute to the [4Fe-4S] cluster site. Positions 212, 241, 262, and 307 each coordinate S-adenosyl-L-methionine. The active-site Nucleophile is the Cys-334.

This sequence belongs to the class I-like SAM-binding methyltransferase superfamily. RNA M5U methyltransferase family. RlmC subfamily.

It carries out the reaction uridine(747) in 23S rRNA + S-adenosyl-L-methionine = 5-methyluridine(747) in 23S rRNA + S-adenosyl-L-homocysteine + H(+). Catalyzes the formation of 5-methyl-uridine at position 747 (m5U747) in 23S rRNA. The polypeptide is 23S rRNA (uracil(747)-C(5))-methyltransferase RlmC (Salmonella typhimurium (strain LT2 / SGSC1412 / ATCC 700720)).